The primary structure comprises 445 residues: Phosphoglucosamine mutase (445 aa).

The active-site Phosphoserine intermediate is serine 102. 4 residues coordinate Mg(2+): serine 102, aspartate 241, aspartate 243, and aspartate 245. The residue at position 102 (serine 102) is a Phosphoserine.

Belongs to the phosphohexose mutase family. Mg(2+) serves as cofactor. In terms of processing, activated by phosphorylation.

The enzyme catalyses alpha-D-glucosamine 1-phosphate = D-glucosamine 6-phosphate. Functionally, catalyzes the conversion of glucosamine-6-phosphate to glucosamine-1-phosphate. In Shewanella oneidensis (strain ATCC 700550 / JCM 31522 / CIP 106686 / LMG 19005 / NCIMB 14063 / MR-1), this protein is Phosphoglucosamine mutase.